The primary structure comprises 394 residues: Elongation factor Tu 1 (394 aa).

One can recognise a tr-type G domain in the interval 10 to 204 (KPHVNVGTIG…ALDSYIPEPQ (195 aa)). The segment at 19–26 (GHVDHGKT) is G1. GTP is bound at residue 19 to 26 (GHVDHGKT). Thr-26 contacts Mg(2+). The interval 60 to 64 (GITIN) is G2. The segment at 81 to 84 (DCPG) is G3. GTP is bound by residues 81-85 (DCPGH) and 136-139 (NKCD). Residues 136–139 (NKCD) are G4. The segment at 174–176 (SAL) is G5.

This sequence belongs to the TRAFAC class translation factor GTPase superfamily. Classic translation factor GTPase family. EF-Tu/EF-1A subfamily. Monomer.

The protein localises to the cytoplasm. It catalyses the reaction GTP + H2O = GDP + phosphate + H(+). In terms of biological role, GTP hydrolase that promotes the GTP-dependent binding of aminoacyl-tRNA to the A-site of ribosomes during protein biosynthesis. The chain is Elongation factor Tu 1 from Shewanella baltica (strain OS195).